The primary structure comprises 1194 residues: Cohesin subunit SA-2 (1194 aa).

Residues 224–309 (FVHRYRDAIA…SRFKDRIVSM (86 aa)) form the SCD domain. The segment at 986–1027 (DTMSVMSGMSGRGSSTRSKKIKPPTGKRKLPEAEESSSSDSM) is disordered. Positions 988–1001 (MSVMSGMSGRGSST) are enriched in low complexity. Residues 1002-1013 (RSKKIKPPTGKR) are compositionally biased toward basic residues.

It belongs to the SCC3 family. In terms of assembly, part of the cohesin complex which is composed of a heterodimer between a SMC1 protein (SMC1A or SMC1B) and SMC3, which are attached via their hinge domain, and RAD21 which link them at their heads, and one STAG protein (STAG1, STAG2 or STAG3). In cohesin complexes, STAG2 is mutually exclusive with STAG1 and STAG3. Interacts directly with RAD21 in cohesin complex. Post-translationally, phosphorylated by PLK1. The large dissociation of cohesin from chromosome arms during prophase is partly due to its phosphorylation.

Its subcellular location is the nucleus. It is found in the chromosome. The protein localises to the centromere. Functionally, component of cohesin complex, a complex required for the cohesion of sister chromatids after DNA replication. The cohesin complex apparently forms a large proteinaceous ring within which sister chromatids can be trapped. At anaphase, the complex is cleaved and dissociates from chromatin, allowing sister chromatids to segregate. The cohesin complex may also play a role in spindle pole assembly during mitosis. The sequence is that of Cohesin subunit SA-2 (stag2) from Xenopus laevis (African clawed frog).